A 485-amino-acid chain; its full sequence is Amidophosphoribosyltransferase, chloroplastic (485 aa).

The transit peptide at 1–18 directs the protein to the chloroplast; that stretch reads KTTNTFASVNDDEKPREE. Residue C19 is the Nucleophile of the active site. The 219-residue stretch at 19 to 237 folds into the Glutamine amidotransferase type-2 domain; the sequence is CGVVGIYGDP…PGEVVVVDHT (219 aa). C253 lines the [4Fe-4S] cluster pocket. Positions 300, 362, and 363 each coordinate Mg(2+). The [4Fe-4S] cluster site is built by C399, C450, and C453.

It in the C-terminal section; belongs to the purine/pyrimidine phosphoribosyltransferase family. Mg(2+) serves as cofactor. [4Fe-4S] cluster is required as a cofactor.

The protein localises to the plastid. It localises to the chloroplast. The catalysed reaction is 5-phospho-beta-D-ribosylamine + L-glutamate + diphosphate = 5-phospho-alpha-D-ribose 1-diphosphate + L-glutamine + H2O. Its pathway is purine metabolism; IMP biosynthesis via de novo pathway; N(1)-(5-phospho-D-ribosyl)glycinamide from 5-phospho-alpha-D-ribose 1-diphosphate: step 1/2. This chain is Amidophosphoribosyltransferase, chloroplastic (PUR1), found in Vigna aconitifolia (Moth bean).